We begin with the raw amino-acid sequence, 119 residues long: Large ribosomal subunit protein bL20 (119 aa).

Belongs to the bacterial ribosomal protein bL20 family.

In terms of biological role, binds directly to 23S ribosomal RNA and is necessary for the in vitro assembly process of the 50S ribosomal subunit. It is not involved in the protein synthesizing functions of that subunit. This chain is Large ribosomal subunit protein bL20, found in Streptococcus agalactiae serotype Ia (strain ATCC 27591 / A909 / CDC SS700).